The chain runs to 404 residues: Cysteine desulfurase IscS (404 aa).

Pyridoxal 5'-phosphate-binding positions include 75 to 76, Asn-155, Gln-183, and 203 to 205; these read AT and SAH. Lys-206 carries the N6-(pyridoxal phosphate)lysine modification. Position 243 (Thr-243) interacts with pyridoxal 5'-phosphate. The active-site Cysteine persulfide intermediate is Cys-328. Cys-328 lines the [2Fe-2S] cluster pocket.

Belongs to the class-V pyridoxal-phosphate-dependent aminotransferase family. NifS/IscS subfamily. In terms of assembly, homodimer. Forms a heterotetramer with IscU, interacts with other sulfur acceptors. Pyridoxal 5'-phosphate serves as cofactor.

It is found in the cytoplasm. The enzyme catalyses (sulfur carrier)-H + L-cysteine = (sulfur carrier)-SH + L-alanine. It participates in cofactor biosynthesis; iron-sulfur cluster biosynthesis. Its function is as follows. Master enzyme that delivers sulfur to a number of partners involved in Fe-S cluster assembly, tRNA modification or cofactor biosynthesis. Catalyzes the removal of elemental sulfur atoms from cysteine to produce alanine. Functions as a sulfur delivery protein for Fe-S cluster synthesis onto IscU, an Fe-S scaffold assembly protein, as well as other S acceptor proteins. The protein is Cysteine desulfurase IscS of Pseudomonas syringae pv. tomato (strain ATCC BAA-871 / DC3000).